The sequence spans 313 residues: Aspartate carbamoyltransferase catalytic subunit (313 aa).

Carbamoyl phosphate-binding residues include arginine 54 and threonine 55. Lysine 82 provides a ligand contact to L-aspartate. Carbamoyl phosphate contacts are provided by arginine 104, histidine 132, and glutamine 135. L-aspartate contacts are provided by arginine 165 and arginine 219. Residues glycine 260 and proline 261 each contribute to the carbamoyl phosphate site.

This sequence belongs to the aspartate/ornithine carbamoyltransferase superfamily. ATCase family. Heterododecamer (2C3:3R2) of six catalytic PyrB chains organized as two trimers (C3), and six regulatory PyrI chains organized as three dimers (R2).

The catalysed reaction is carbamoyl phosphate + L-aspartate = N-carbamoyl-L-aspartate + phosphate + H(+). The protein operates within pyrimidine metabolism; UMP biosynthesis via de novo pathway; (S)-dihydroorotate from bicarbonate: step 2/3. Catalyzes the condensation of carbamoyl phosphate and aspartate to form carbamoyl aspartate and inorganic phosphate, the committed step in the de novo pyrimidine nucleotide biosynthesis pathway. The chain is Aspartate carbamoyltransferase catalytic subunit from Thermobifida fusca (strain YX).